A 409-amino-acid polypeptide reads, in one-letter code: Tryptophan synthase beta chain (409 aa).

Residue lysine 95 is modified to N6-(pyridoxal phosphate)lysine.

Belongs to the TrpB family. As to quaternary structure, tetramer of two alpha and two beta chains. It depends on pyridoxal 5'-phosphate as a cofactor.

It carries out the reaction (1S,2R)-1-C-(indol-3-yl)glycerol 3-phosphate + L-serine = D-glyceraldehyde 3-phosphate + L-tryptophan + H2O. The protein operates within amino-acid biosynthesis; L-tryptophan biosynthesis; L-tryptophan from chorismate: step 5/5. Its function is as follows. The beta subunit is responsible for the synthesis of L-tryptophan from indole and L-serine. This Pseudomonas syringae pv. syringae (strain B728a) protein is Tryptophan synthase beta chain.